An 84-amino-acid polypeptide reads, in one-letter code: Cell division topological specificity factor (84 aa).

It belongs to the MinE family.

Prevents the cell division inhibition by proteins MinC and MinD at internal division sites while permitting inhibition at polar sites. This ensures cell division at the proper site by restricting the formation of a division septum at the midpoint of the long axis of the cell. In Cupriavidus taiwanensis (strain DSM 17343 / BCRC 17206 / CCUG 44338 / CIP 107171 / LMG 19424 / R1) (Ralstonia taiwanensis (strain LMG 19424)), this protein is Cell division topological specificity factor.